The following is a 318-amino-acid chain: MSAARTLRVPGRHGYAAEFSPYLPGRLACAAAQHYGIAGCGTLLVLDQNESGLQIFRSFDWNDGLFDVTWSENNEHVLVTCSGDGSLQLWDTAKATGPLQVYKEHTQEVYSVDWSQTRGEQLVVSGSWDQTVKVWDPTVGNSLCTFRGHESVIYSTIWSPHIPGCFASASGDQTLRIWDVKTTGVRIVIPAHQTEILSCDWCKYNENLVVTGAVDCSLRGWDLRNVRQPVFELLGHTYAIRRVKFSPFHASVLASCSYDFTVRFWNFSKPDPLLETVEHHTEFTCGLDLSLQSPTQVADCSWDETIKIYDPVCLTVPG.

WD repeat units follow at residues 60 to 91, 104 to 136, 148 to 179, 191 to 222, 235 to 266, and 279 to 310; these read DWND…QLWD, EHTQ…KVWD, GHES…RIWD, AHQT…RGWD, GHTY…RFWN, and HHTE…KIYD.

It belongs to the WD repeat peroxin-7 family. Interacts with PEX5; interaction only takes place when PEX7 is associated with cargo proteins. Interacts with VWA8.

The protein localises to the cytoplasm. It localises to the cytosol. Its subcellular location is the peroxisome matrix. Receptor required for the peroxisomal import of proteins containing a C-terminal PTS2-type peroxisomal targeting signal. Specifically binds to cargo proteins containing a PTS2 peroxisomal targeting signal in the cytosol. Cargo protein-binding triggers interaction with PEX5 and formation of a ternary complex composed of PEX5 and PEX7 along with PTS2-containing cargo proteins, which is tranlocated into peroxisomes by passing through the PEX13-PEX14 docking complex. The sequence is that of Peroxisomal targeting signal 2 receptor from Mus musculus (Mouse).